An 815-amino-acid polypeptide reads, in one-letter code: Ubiquitin carboxyl-terminal hydrolase 16 (815 aa).

Residues 1-27 (MGKKKVKDRSAGTDSSSETAGPSCTHI) form a disordered region. Positions 12-22 (GTDSSSETAGP) are enriched in polar residues. Residues 22–143 (PSCTHIRKGT…QLITNIRKQV (122 aa)) form a UBP-type zinc finger. Positions 24, 26, 48, 51, 76, 79, 84, 91, 95, 104, 117, and 120 each coordinate Zn(2+). Over residues 148–161 (DKRNASKKSWKEDI) the composition is skewed to basic and acidic residues. A disordered region spans residues 148 to 200 (DKRNASKKSWKEDISVMNSAEQTQDEEKGKKGKQKSSSKQEDSPKSHQSAAAG). The 607-residue stretch at 208-814 (RGLSNLGNTC…QAYLLFYEKI (607 aa)) folds into the USP domain. Residue cysteine 217 is the Nucleophile of the active site. 2 stretches are compositionally biased toward basic residues: residues 411–420 (NQKKAVQHRH) and 449–468 (QQKKAKKQAKKQAKNQRRQQ). Residues 411–510 (NQKKAVQHRH…GSADAQPADT (100 aa)) form a disordered region. Positions 478 to 510 (AITNQSSTDPADSSMQTQTVSVNGSADAQPADT) are enriched in polar residues. The active-site Proton acceptor is the histidine 752.

The protein belongs to the peptidase C19 family. USP16 subfamily. In terms of assembly, homotetramer.

The protein localises to the nucleus. It catalyses the reaction Thiol-dependent hydrolysis of ester, thioester, amide, peptide and isopeptide bonds formed by the C-terminal Gly of ubiquitin (a 76-residue protein attached to proteins as an intracellular targeting signal).. In terms of biological role, specifically deubiquitinates 'Lys-120' of histone H2A (H2AK119Ub), a specific tag for epigenetic transcriptional repression, thereby acting as a coactivator. Deubiquitination of histone H2A is a prerequisite for subsequent phosphorylation at 'Ser-11' of histone H3 (H3S10ph), and is required for chromosome segregation when cells enter into mitosis. Regulates Hox gene expression via histone H2A deubiquitination. Prefers nucleosomal substrates. Does not deubiquitinate histone H2B. This Danio rerio (Zebrafish) protein is Ubiquitin carboxyl-terminal hydrolase 16 (usp16).